Here is a 209-residue protein sequence, read N- to C-terminus: Large ribosomal subunit protein bL25 (209 aa).

The tract at residues 190-209 (PDASAAPVAAPAAPAKKGKK) is disordered.

Belongs to the bacterial ribosomal protein bL25 family. CTC subfamily. As to quaternary structure, part of the 50S ribosomal subunit; part of the 5S rRNA/L5/L18/L25 subcomplex. Contacts the 5S rRNA. Binds to the 5S rRNA independently of L5 and L18.

This is one of the proteins that binds to the 5S RNA in the ribosome where it forms part of the central protuberance. The sequence is that of Large ribosomal subunit protein bL25 from Delftia acidovorans (strain DSM 14801 / SPH-1).